The chain runs to 2434 residues: ATP-binding cassette sub-family A member 2 (2434 aa).

N14 is a glycosylation site (N-linked (GlcNAc...) asparagine). 2 helical membrane passes run 22–42 (PWVL…LLGL) and 54–74 (AFYT…QSLC). N-linked (GlcNAc...) asparagine glycans are attached at residues N89, N168, and N173. Position 271 is an N5-methylglutamine (Q271). N305, N368, N379, N420, N432, N476, N484, N494, N530, N549, N590, N600, and N628 each carry an N-linked (GlcNAc...) asparagine glycan. A compositionally biased stretch (low complexity) spans 354–369 (RAPAPQAGSPSGPANS). Residues 354–396 (RAPAPQAGSPSGPANSTGVGANTGPNTTVEEGTQSPVTPASPD) are disordered. The span at 370–396 (TGVGANTGPNTTVEEGTQSPVTPASPD) shows a compositional bias: polar residues. The next 6 membrane-spanning stretches (helical) occupy residues 699–719 (FLFV…VYSV), 750–770 (VAWF…LTAI), 782–802 (VLII…FCFL), 813–833 (ASAC…YVAI), 857–877 (AFGL…GIQW), and 893–913 (LLAV…TWYI). The region spanning 990–1221 (VCVDKLTKVY…YGDGYRLTLV (232 aa)) is the ABC transporter 1 domain. 1024–1031 (GHNGAGKT) lines the ATP pocket. Positions 1225-1246 (AEPGTSQEPGMASSPSGRPQLS) are disordered. Residues 1228 to 1246 (GTSQEPGMASSPSGRPQLS) show a composition bias toward polar residues. Phosphoserine is present on S1238. An N-linked (GlcNAc...) asparagine glycan is attached at N1247. A phosphoserine mark is found at S1327 and S1331. A helical transmembrane segment spans residues 1461–1481 (ILLPAFFVCVAMTVALSVPEI). 3 N-linked (GlcNAc...) asparagine glycosylation sites follow: N1496, N1549, and N1557. The tract at residues 1587 to 1606 (NFVPPPPSPAPSDSPLSPDE) is disordered. Pro residues predominate over residues 1589-1598 (VPPPPSPAPS). N1613, N1678, and N1776 each carry an N-linked (GlcNAc...) asparagine glycan. The next 5 helical transmembrane spans lie at 1793–1813 (VVIA…FVVF), 1842–1862 (VWDM…LFVF), 1873–1893 (FPAV…IMYP), 1906–1926 (VFLI…TFLL), and 1992–2012 (GLVA…MCQY). In terms of domain architecture, ABC transporter 2 spans 2051–2286 (VKIENLTKVY…FGDGYMITVR (236 aa)). N-linked (GlcNAc...) asparagine glycosylation occurs at N2055. Residue 2088–2095 (GVNGAGKT) participates in ATP binding. Phosphothreonine is present on T2411.

This sequence belongs to the ABC transporter superfamily. ABCA family. N-glycosylated. Post-translationally, methylated at Gln-271 by N6AMT1. As to expression, expressed at high levels in brain, at moderate levels in heart, kidney and lung, and at low levels in skeletal muscle, stomach, spleen, colon and pancreas. Not detected in the liver or small intestine. In brain, highly expressed in white matter and detected in oligodendrocytes. Expressed in cerebellum as well as the anterior commissure. Expressed mainly in the white matter but is also scattered in gray matter throughout the whole brain. Expressed in myelinating cells of both ventral and dorsal restricted regions in newborn spinal cord. Expressed in non-myelin-forming as well as in myelin-forming Schwann cells in the sciatic nerve.

It localises to the endosome membrane. The protein localises to the lysosome membrane. Functionally, probable transporter, its natural substrate has not been found yet. May have a role in macrophage lipid metabolism and neural development. May play a role in myelination, perhaps as a transporter for certain kinds of myelin chemical components. May play an important role in gamma-secretase processing of APP and thus in amyloid-beta peptide generation. Regulates esterification of plasma membrane cholesterol by modulation of sphingolipid metabolism. In terms of biological role, probable lipid transporter that modulates cholesterol sequestration in the late endosome/lysosome by regulating the intracellular sphingolipid metabolism, in turn participates in cholesterol homeostasis. May alter the transbilayer distribution of ceramide in the intraluminal membrane lipid bilayer, favoring its retention in the outer leaflet that results in increased acid ceramidase activity in the late endosome/lysosome, facilitating ceramide deacylation to sphingosine leading to the sequestration of free cholesterol in lysosomes. In addition regulates amyloid-beta production either by activating a signaling pathway that regulates amyloid precursor protein transcription through the modulation of sphingolipid metabolism or through its role in gamma-secretase processing of APP. May play a role in myelin formation. This is ATP-binding cassette sub-family A member 2 from Rattus norvegicus (Rat).